A 108-amino-acid polypeptide reads, in one-letter code: Class I hydrophobin 3 (108 aa).

A signal peptide spans 1–17 (MFSRVFAVASLAALALA). Disulfide bonds link Cys-26/Cys-87, Cys-33/Cys-81, Cys-34/Cys-67, and Cys-88/Cys-101.

The protein belongs to the fungal hydrophobin family. As to quaternary structure, self-assembles to form functional amyloid fibrils called rodlets. Self-assembly into fibrillar rodlets occurs spontaneously at hydrophobic:hydrophilic interfaces and the rodlets further associate laterally to form amphipathic monolayers.

Its subcellular location is the secreted. It localises to the cell wall. In terms of biological role, aerial growth, conidiation, and dispersal of filamentous fungi in the environment rely upon a capability of their secreting small amphipathic proteins called hydrophobins (HPBs) with low sequence identity. Class I can self-assemble into an outermost layer of rodlet bundles on aerial cell surfaces, conferring cellular hydrophobicity that supports fungal growth, development and dispersal; whereas Class II form highly ordered films at water-air interfaces through intermolecular interactions but contribute nothing to the rodlet structure. In Pisolithus tinctorius (Dead man's foot), this protein is Class I hydrophobin 3.